The primary structure comprises 342 residues: MKVEDFDFDLPEELIAQTPLLDRTSSRLMVLDKESGDIKDQHFTDIISYLNEGDALVLNDTRVLPARLHGIKDETGAHIEVLLLKQKEGNAWETLVKPAKRIRKGATITFGDGALKATCLEELEHGGRILEFSYEGIFYEVLEQLGEMPLPPYIKEQLADQDRYQTVYAKENGSAAAPTAGLHFTEDLLAKISAKGVEIIFVTLHVGLGTFRPVDVEDTANHKMHSEFYRLTEESAERINKIKVQGGKVVAVGTTSIRTLETIASRHDGKLVAESGWTEIFISPGYTFQAVDALITNFHLPKSTLIMLVSALSDRTKILAAYNHAVEQQYRFFSFGDAMFIH.

It belongs to the QueA family. As to quaternary structure, monomer.

It is found in the cytoplasm. It catalyses the reaction 7-aminomethyl-7-carbaguanosine(34) in tRNA + S-adenosyl-L-methionine = epoxyqueuosine(34) in tRNA + adenine + L-methionine + 2 H(+). It participates in tRNA modification; tRNA-queuosine biosynthesis. Its function is as follows. Transfers and isomerizes the ribose moiety from AdoMet to the 7-aminomethyl group of 7-deazaguanine (preQ1-tRNA) to give epoxyqueuosine (oQ-tRNA). In Listeria monocytogenes serotype 4a (strain HCC23), this protein is S-adenosylmethionine:tRNA ribosyltransferase-isomerase.